A 262-amino-acid chain; its full sequence is Nurim (262 aa).

At 1–4 (MAPA) the chain is on the nuclear side. The helical transmembrane segment at 5-28 (LLLVPAALASFILAFGTGVEFVRF) threads the bilayer. Topologically, residues 29–58 (TSLRPLLGGIPESGGPDARQGWLAALQDRS) are perinuclear space. A helical membrane pass occupies residues 59 to 80 (ILAPLAWDLGLLLLFVGQHSLM). The Nuclear portion of the chain corresponds to 81 to 97 (AAERVKAWTSRYFGVLQ). The helical transmembrane segment at 98–114 (RSLYVACTALALQLVMR) threads the bilayer. Over 115–133 (YWEPIPKGPVLWEARAEPW) the chain is Perinuclear space. The helical transmembrane segment at 134-164 (ATWVPLLCFVLHVISWLLIFSILLVFDYAEL) threads the bilayer. Residues 165–191 (MGLKQVYYHVLGLGEPLALKSPRALRL) are Nuclear-facing. The helical transmembrane segment at 192-210 (FSHLRHPVCVELLTVLWVV) threads the bilayer. Residues 211–216 (PTLGTD) lie on the Perinuclear space side of the membrane. Residues 217-234 (RLLLAFLLTLYLGLAHGL) form a helical membrane-spanning segment. Topologically, residues 235 to 262 (DQQDLRYLRAQLQRKLHLLSRPQDGEAE) are nuclear.

Belongs to the nurim family.

Its subcellular location is the nucleus inner membrane. The polypeptide is Nurim (NRM) (Pan troglodytes (Chimpanzee)).